The sequence spans 236 residues: 2,3,4,5-tetrahydropyridine-2,6-dicarboxylate N-acetyltransferase (236 aa).

Belongs to the transferase hexapeptide repeat family. DapH subfamily.

It carries out the reaction (S)-2,3,4,5-tetrahydrodipicolinate + acetyl-CoA + H2O = L-2-acetamido-6-oxoheptanedioate + CoA. It participates in amino-acid biosynthesis; L-lysine biosynthesis via DAP pathway; LL-2,6-diaminopimelate from (S)-tetrahydrodipicolinate (acetylase route): step 1/3. Functionally, catalyzes the transfer of an acetyl group from acetyl-CoA to tetrahydrodipicolinate. The protein is 2,3,4,5-tetrahydropyridine-2,6-dicarboxylate N-acetyltransferase of Clostridium perfringens (strain ATCC 13124 / DSM 756 / JCM 1290 / NCIMB 6125 / NCTC 8237 / Type A).